A 163-amino-acid chain; its full sequence is NADPH-dependent 7-cyano-7-deazaguanine reductase (163 aa).

C54 acts as the Thioimide intermediate in catalysis. The active-site Proton donor is the D61. Substrate-binding positions include 76-78 and 95-96; these read VES and HE.

It belongs to the GTP cyclohydrolase I family. QueF type 1 subfamily.

Its subcellular location is the cytoplasm. The catalysed reaction is 7-aminomethyl-7-carbaguanine + 2 NADP(+) = 7-cyano-7-deazaguanine + 2 NADPH + 3 H(+). The protein operates within tRNA modification; tRNA-queuosine biosynthesis. Functionally, catalyzes the NADPH-dependent reduction of 7-cyano-7-deazaguanine (preQ0) to 7-aminomethyl-7-deazaguanine (preQ1). The polypeptide is NADPH-dependent 7-cyano-7-deazaguanine reductase (Streptococcus thermophilus (strain CNRZ 1066)).